A 514-amino-acid chain; its full sequence is Serine/threonine protein phosphatase PstP (514 aa).

Topologically, residues 1 to 302 are cytoplasmic; the sequence is MARVTLVLRY…RPRWSGRRLA (302 aa). In terms of domain architecture, PPM-type phosphatase spans 9–238; that stretch reads RYAARSDRGL…DNVTVVVADV (230 aa). Positions 38, 39, 118, 160, 191, and 229 each coordinate Mn(2+). A helical membrane pass occupies residues 303-323; sequence FVVALVTVLMTAGLLIGRAII. At 324-514 the chain is on the extracellular side; the sequence is RSNYYVADYA…QPGIDCRAAA (191 aa). The tract at residues 420–514 is disordered; sequence LLPPCPAPRA…QPGIDCRAAA (95 aa). Over residues 440–480 the composition is skewed to low complexity; that stretch reads TTSETTEPNVTSSPASPSPTTSASAPTGTTPAIPTSASPAA.

Mn(2+) is required as a cofactor.

It is found in the cell membrane. The catalysed reaction is O-phospho-L-seryl-[protein] + H2O = L-seryl-[protein] + phosphate. It carries out the reaction O-phospho-L-threonyl-[protein] + H2O = L-threonyl-[protein] + phosphate. In terms of biological role, plays an important role in regulating cell division and growth by reversible phosphorylation signaling. May play important roles in regulating cellular metabolism and signaling pathways, which could mediate the growth and development of the cell. Plays a role in establishing and maintaining infection. In Mycobacterium tuberculosis (strain CDC 1551 / Oshkosh), this protein is Serine/threonine protein phosphatase PstP (pstP).